A 319-amino-acid polypeptide reads, in one-letter code: Putative metal ion transporter YfjQ (319 aa).

2 helical membrane passes run 254 to 274 and 290 to 310; these read IMMTLTIVSTIFIPLTFIAGV and GYFAVLGLMAALVIGMLIWFV.

This sequence belongs to the CorA metal ion transporter (MIT) (TC 1.A.35) family.

It localises to the cell membrane. This is Putative metal ion transporter YfjQ (yfjQ) from Bacillus subtilis (strain 168).